Here is a 328-residue protein sequence, read N- to C-terminus: Leucine carboxyl methyltransferase 1 (328 aa).

S-adenosyl-L-methionine-binding positions include Arg81, Gly105, Asp128, 175 to 177 (DLN), and Glu201.

Belongs to the methyltransferase superfamily. LCMT family.

It carries out the reaction [phosphatase 2A protein]-C-terminal L-leucine + S-adenosyl-L-methionine = [phosphatase 2A protein]-C-terminal L-leucine methyl ester + S-adenosyl-L-homocysteine. Inhibited by S-adenosyl-L-homocysteine. In terms of biological role, methylates the carboxyl group of the C-terminal leucine residue of protein phosphatase 2A catalytic subunits to form alpha-leucine ester residues. Acts on the two major protein phosphatase 2A catalytic subunits, PPH21 and PPH22. The sequence is that of Leucine carboxyl methyltransferase 1 (PPM1) from Saccharomyces cerevisiae (strain ATCC 204508 / S288c) (Baker's yeast).